The sequence spans 112 residues: MVAAKKTKKTHESINNRLALVMKSGKYTLGYKTVLKSLRSSKGKLIIIANNCPPLRKSEIEYYAMLAKVGVHHYNGNNVDLGTACGKYYRVCCLSIVDPGDSDIIKTLPGDQ.

It belongs to the eukaryotic ribosomal protein eL30 family.

This chain is Large ribosomal subunit protein eL30 (RPL30), found in Lupinus luteus (European yellow lupine).